A 304-amino-acid polypeptide reads, in one-letter code: Eukaryotic translation initiation factor 2 subunit alpha (304 aa).

In terms of domain architecture, S1 motif spans 17–88 (DDIVMVNVQQ…EKGYIDLSKR (72 aa)). Ser52 is modified (phosphoserine; by GCN2). Positions 283–304 (LESKELDNRSDSEDDEDESDDE) are disordered. Positions 284–293 (ESKELDNRSD) are enriched in basic and acidic residues. Phosphoserine is present on residues Ser292 and Ser294. The segment covering 294–304 (SEDDEDESDDE) has biased composition (acidic residues).

This sequence belongs to the eIF-2-alpha family. Eukaryotic translation initiation factor 2 eIF2 is a heterotrimeric complex composed of an alpha, a beta and a gamma subunit. The factors eIF-1, eIF-2, eIF-3, TIF5/eIF-5 and methionyl-tRNAi form a multifactor complex (MFC) that may bind to the 40S ribosome. Interacts with CDC123; the interaction is direct. Interacts with GCD1. In terms of processing, phosphorylated; phosphorylation on Ser-52 by the GCN2 protein kinase occurs in response to low amino acid, carbon, or purine availability. Phosphorylation inhibits the guanine nucleotide exchange factor activity of the eIF2B complex.

Its subcellular location is the cytoplasm. The protein localises to the cytosol. In terms of biological role, eIF-2 functions in the early steps of protein synthesis by forming a ternary complex with GTP and initiator tRNA. This complex binds to a 40S ribosomal subunit, followed by mRNA binding to form a 43S pre-initiation complex. Junction of the 60S ribosomal subunit to form the 80S initiation complex is preceded by hydrolysis of the GTP bound to eIF-2 and release of an eIF-2-GDP binary complex. In order for eIF-2 to recycle and catalyze another round of initiation, the GDP bound to eIF-2 must exchange with GTP by way of a reaction catalyzed by eIF2B. The sequence is that of Eukaryotic translation initiation factor 2 subunit alpha from Saccharomyces cerevisiae (strain ATCC 204508 / S288c) (Baker's yeast).